The sequence spans 1151 residues: uncharacterized protein (1151 aa).

Disordered regions lie at residues 611–633 (FVKG…DEEE), 709–740 (NLVP…IMEV), 753–778 (PPIL…KSIL), 795–880 (PPVI…PPKL), and 1060–1151 (LKEP…TQQE). 2 stretches are compositionally biased toward pro residues: residues 754–773 (PILP…PQEP) and 811–842 (IVPP…PSQP). Low complexity predominate over residues 867–878 (PITPDTPAITPP). Over residues 1082 to 1091 (ESDNEDDELD) the composition is skewed to acidic residues. Residues 1131 to 1142 (PVDTSDATKIST) show a composition bias toward polar residues.

This is an uncharacterized protein from Ostreid herpesvirus 1 (isolate France) (OsHV-1).